The primary structure comprises 835 residues: Protein translocase subunit SecA 1 (835 aa).

Residues Gln-85, 103–107, and Asp-492 contribute to the ATP site; that span reads GEGKT. The segment at 788–807 is disordered; that stretch reads VQGEAVHPSSDGEEAKKKPV. Cys-819, Cys-821, Cys-830, and Cys-831 together coordinate Zn(2+).

This sequence belongs to the SecA family. Monomer and homodimer. Part of the essential Sec protein translocation apparatus which comprises SecA, SecYEG and auxiliary proteins SecDF. Other proteins may also be involved. Zn(2+) is required as a cofactor.

It is found in the cell membrane. Its subcellular location is the cytoplasm. It catalyses the reaction ATP + H2O + cellular proteinSide 1 = ADP + phosphate + cellular proteinSide 2.. Functionally, part of the Sec protein translocase complex. Interacts with the SecYEG preprotein conducting channel. Has a central role in coupling the hydrolysis of ATP to the transfer of proteins into and across the cell membrane, serving as an ATP-driven molecular motor driving the stepwise translocation of polypeptide chains across the membrane. The protein is Protein translocase subunit SecA 1 of Bacillus thuringiensis subsp. konkukian (strain 97-27).